We begin with the raw amino-acid sequence, 427 residues long: Peptidase B (427 aa).

The Mn(2+) site is built by Lys-195 and Asp-200. Lys-207 is a catalytic residue. Mn(2+)-binding residues include Asp-218, Asp-277, and Glu-279. The active site involves Arg-281.

Belongs to the peptidase M17 family. In terms of assembly, homohexamer. The cofactor is Mn(2+).

The protein localises to the cytoplasm. It carries out the reaction Release of an N-terminal amino acid, Xaa, from a peptide or arylamide. Xaa is preferably Glu or Asp but may be other amino acids, including Leu, Met, His, Cys and Gln.. Its function is as follows. Probably plays an important role in intracellular peptide degradation. The protein is Peptidase B of Escherichia coli O127:H6 (strain E2348/69 / EPEC).